The primary structure comprises 119 residues: Large ribosomal subunit protein bL20 (119 aa).

The protein belongs to the bacterial ribosomal protein bL20 family.

Functionally, binds directly to 23S ribosomal RNA and is necessary for the in vitro assembly process of the 50S ribosomal subunit. It is not involved in the protein synthesizing functions of that subunit. The sequence is that of Large ribosomal subunit protein bL20 from Stenotrophomonas maltophilia (strain K279a).